Reading from the N-terminus, the 187-residue chain is MPKINGNEIRPGNVLEHNGGLWAAVKVDHVKPGKGGAFAQVEMKNLRNGSKLNERFRSADKVERVRLEQKDQQFLYETDGMLVFMDTETYEQIELPADLLGDRRPFLQDGMTIVVEFYESEALNATVPQKVTCKIVETEPVVKGQTAANSFKPAILDNGVKVMVPPFVGQDEMIIVNTETMEYSERA.

Belongs to the elongation factor P family.

It is found in the cytoplasm. Its pathway is protein biosynthesis; polypeptide chain elongation. Functionally, involved in peptide bond synthesis. Stimulates efficient translation and peptide-bond synthesis on native or reconstituted 70S ribosomes in vitro. Probably functions indirectly by altering the affinity of the ribosome for aminoacyl-tRNA, thus increasing their reactivity as acceptors for peptidyl transferase. This Ruegeria sp. (strain TM1040) (Silicibacter sp.) protein is Elongation factor P.